We begin with the raw amino-acid sequence, 100 residues long: MSRKTQRYSKEFKAEAVRTVPENQLSISEGASRLSLPEGTLGQWVTAARKGLGTPGSRTVAELESEILQLRKALNEARLERDILKKATAYFAQESLKNTR.

This sequence belongs to the transposase 8 family.

The polypeptide is Insertion element IS600 uncharacterized 11 kDa protein (Shigella sonnei).